We begin with the raw amino-acid sequence, 480 residues long: Acyl-coenzyme A synthetase ACSM6, mitochondrial (480 aa).

Residues 1–21 (MLGRFQPFSLVRSFRLGFEAC) constitute a mitochondrion transit peptide. ATP-binding positions include 226 to 234 (TKGTTGAPK), 366 to 371 (EGYGQT), Asp-453, and Arg-468.

The protein belongs to the ATP-dependent AMP-binding enzyme family. As to quaternary structure, monomer. Mg(2+) serves as cofactor. It depends on Mn(2+) as a cofactor.

It is found in the mitochondrion. It catalyses the reaction a medium-chain fatty acid + ATP + CoA = a medium-chain fatty acyl-CoA + AMP + diphosphate. Catalyzes the activation of fatty acids by CoA to produce an acyl-CoA, the first step in fatty acid metabolism. The polypeptide is Acyl-coenzyme A synthetase ACSM6, mitochondrial (ACSM6) (Homo sapiens (Human)).